Here is a 267-residue protein sequence, read N- to C-terminus: Undecaprenyl-diphosphatase (267 aa).

Helical transmembrane passes span L4 to T24, F41 to F61, L69 to V89, L96 to I116, A173 to I193, I207 to F227, and F239 to L259.

The protein belongs to the UppP family.

Its subcellular location is the cell inner membrane. The enzyme catalyses di-trans,octa-cis-undecaprenyl diphosphate + H2O = di-trans,octa-cis-undecaprenyl phosphate + phosphate + H(+). Catalyzes the dephosphorylation of undecaprenyl diphosphate (UPP). Confers resistance to bacitracin. In Campylobacter jejuni subsp. jejuni serotype O:2 (strain ATCC 700819 / NCTC 11168), this protein is Undecaprenyl-diphosphatase.